Reading from the N-terminus, the 214-residue chain is Small ribosomal subunit protein uS3c (214 aa).

One can recognise a KH type-2 domain in the interval 39–111 (IRTYLNKLAK…QITINVVEVE (73 aa)).

It belongs to the universal ribosomal protein uS3 family. In terms of assembly, part of the 30S ribosomal subunit.

Its subcellular location is the plastid. The protein localises to the chloroplast. This Thalassiosira pseudonana (Marine diatom) protein is Small ribosomal subunit protein uS3c (rps3).